The primary structure comprises 187 residues: Flavin prenyltransferase UbiX (187 aa).

FMN-binding positions include 9–11 (GSS), Thr34, 88–91 (SISS), and Arg123. Tyr153 and Lys169 together coordinate dimethylallyl phosphate.

Belongs to the UbiX/PAD1 family.

The catalysed reaction is dimethylallyl phosphate + FMNH2 = prenylated FMNH2 + phosphate. Functionally, flavin prenyltransferase that catalyzes the synthesis of the prenylated FMN cofactor (prenyl-FMN) for 4-hydroxy-3-polyprenylbenzoic acid decarboxylase UbiD. The prenyltransferase is metal-independent and links a dimethylallyl moiety from dimethylallyl monophosphate (DMAP) to the flavin N5 and C6 atoms of FMN. This chain is Flavin prenyltransferase UbiX, found in Campylobacter jejuni subsp. jejuni serotype O:2 (strain ATCC 700819 / NCTC 11168).